A 70-amino-acid chain; its full sequence is Large ribosomal subunit protein bL31 (70 aa).

Zn(2+) is bound by residues cysteine 16, cysteine 18, cysteine 37, and cysteine 40.

It belongs to the bacterial ribosomal protein bL31 family. Type A subfamily. Part of the 50S ribosomal subunit. Requires Zn(2+) as cofactor.

Functionally, binds the 23S rRNA. The polypeptide is Large ribosomal subunit protein bL31 (Desulfovibrio desulfuricans (strain ATCC 27774 / DSM 6949 / MB)).